Reading from the N-terminus, the 833-residue chain is Leucine--tRNA ligase (833 aa).

The 'HIGH' region signature appears at 41–52 (PYPSGAGLHVGH). The 'KMSKS' region motif lies at 610 to 614 (KMSKS). Lysine 613 is a binding site for ATP.

The protein belongs to the class-I aminoacyl-tRNA synthetase family.

It localises to the cytoplasm. It carries out the reaction tRNA(Leu) + L-leucine + ATP = L-leucyl-tRNA(Leu) + AMP + diphosphate. The chain is Leucine--tRNA ligase from Streptococcus pyogenes serotype M12 (strain MGAS2096).